Here is a 430-residue protein sequence, read N- to C-terminus: NEDD8-activating enzyme E1 catalytic subunit (430 aa).

52–76 (GLGCELLKNLALSGFRTIEVIDMDT) is an ATP binding site. Cys211 serves as the catalytic Glycyl thioester intermediate.

The protein belongs to the ubiquitin-activating E1 family. UBA3 subfamily. As to quaternary structure, heterodimer of uba-3 and ula-1. Interacts with NEDD8 and ubc-12. As to expression, expressed in intestine, vulva epithelium and head and tail neurons.

It is found in the nucleus. It localises to the cytoplasm. It carries out the reaction ATP + [NEDD8 protein] + [E1 NEDD8-activating enzyme]-L-cysteine = AMP + diphosphate + [E1 NEDD8-activating enzyme]-S-[NEDD8 protein]-yl-L-cysteine.. It functions in the pathway protein modification; protein neddylation. Catalytic subunit of the dimeric rfl-1 (uba-3)-ula-1 E1 enzyme. E1 activates NEDD8 by first adenylating its C-terminal glycine residue with ATP, thereafter linking this residue to the side chain of the catalytic cysteine, yielding a NEDD8-uba-3 thioester and free AMP. E1 finally transfers NEDD8 to the catalytic cysteine of ubc-12. Required for cytokinesis and mitotic spindle orientation during early embryogenesis. This chain is NEDD8-activating enzyme E1 catalytic subunit, found in Caenorhabditis elegans.